We begin with the raw amino-acid sequence, 98 residues long: Large ribosomal subunit protein bL28 (98 aa).

It belongs to the bacterial ribosomal protein bL28 family.

The protein is Large ribosomal subunit protein bL28 of Thermus thermophilus (strain ATCC BAA-163 / DSM 7039 / HB27).